We begin with the raw amino-acid sequence, 611 residues long: MSEFSQTALFPSLPRTARGTAVVLGNTPAGDKIQYCNGTSVYTVPVGSLTDTEIYTEHSHQTTVAKTSPSGYYCASGDVHGNVRIWDTTQTTHILKTTIPVFSGPVKDISWDSESKRIAAVGEGRERFGHVFLFDTGTSNGNLTGQARAMNSVDFKPSRPFRIISGSDDNTVAIFEGPPFKFKSTFGEHTKFVHSVRYNPDGSLFASTGGDGTIVLYNGVDGTKTGVFEDDSLKNVAHSGSVFGLTWSPDGTKIASASADKTIKIWNVATLKVEKTIPVGTRIEDQQLGIIWTKQALVSISANGFINFVNPELGSIDQVRYGHNKAITALSSSADGKTLFSADAEGHINSWDISTGISNRVFPDVHATMITGIKTTSKGDLFTVSWDDHLKVVPAGGSGVDSSKAVANKLSSQPLGLAVSADGDIAVAACYKHIAIYSHGKLTEVPISYNSSCVALSNDKQFVAVGGQDSKVHVYKLSGASVSEVKTIVHPAEITSVAFSNNGAFLVATDQSRKVIPYSVANNFELAHTNSWTFHTAKVACVSWSPDNVRLATGSLDNSVIVWNMNKPSDHPIIIKGAHAMSSVNSVIWLNETTIVSAGQDSNIKFWNVPF.

9 WD repeats span residues 57 to 96 (EHSH…HILK), 145 to 185 (GQAR…FKST), 188 to 227 (EHTK…KTGV), 237 to 276 (AHSG…VEKT), 322 to 361 (GHNK…SNRV), 446 to 485 (PISY…VSEV), 489 to 528 (VHPA…ELAH), 534 to 573 (FHTA…DHPI), and 579 to 610 (HAMS…WNVP).

The protein belongs to the WD repeat AIP1 family.

The protein resides in the cytoplasm. Its subcellular location is the cytoskeleton. In terms of biological role, induces disassembly of actin filaments in conjunction with ADF/cofilin family proteins. Regulator of actin organization in myofibrils. This is Actin-interacting protein 1 (unc-78) from Caenorhabditis elegans.